The primary structure comprises 376 residues: Protein insensitive (376 aa).

A coiled-coil region spans residues 50–79; sequence QVEVENRALRDKVRYLEAKLQQHKDLLSQI. In terms of domain architecture, BEN spans 258 to 356; that stretch reads GPNNTCVPAS…TKCADENKMM (99 aa).

Homodimer. Interacts (via BEN domain) with Su(H). Interacts with Cp190.

The protein resides in the nucleus. Can act as both a transcriptional repressor and corepressor. Represses the expression of genes involved in neural development and preferentially binds palindromic sequence 5'-CCAATTGG-3' to mediate transcriptional repression. Acts as a corepressor for suppressor of hairless (Su(H)) and inhibits Notch signaling during peripheral nervous system development. The protein is Protein insensitive (insv) of Drosophila melanogaster (Fruit fly).